The chain runs to 226 residues: UPF0758 protein CHY_0341 (226 aa).

The 123-residue stretch at 104–226 (NFLNPDDVYN…YISMKAERLF (123 aa)) folds into the MPN domain. Zn(2+) contacts are provided by histidine 175, histidine 177, and aspartate 188. Residues 175–188 (HNHPSGDPTPSKED) carry the JAMM motif motif.

The protein belongs to the UPF0758 family.

This is UPF0758 protein CHY_0341 from Carboxydothermus hydrogenoformans (strain ATCC BAA-161 / DSM 6008 / Z-2901).